The following is a 618-amino-acid chain: Transcriptional regulator CPUR_05421 (618 aa).

Positions cysteine 14–cysteine 41 form a DNA-binding region, zn(2)-C6 fungal-type. Residues threonine 52–glutamate 87 are disordered. Over residues asparagine 59–alanine 81 the composition is skewed to polar residues.

The protein resides in the nucleus. Transcriptional regulator; part of the ergochrome gene cluster responsible for the typical purple-black color of the ergot sclerotia. The ergochrome gene cluster produces several ergot pigments including the yellow ergochrome secalonic acid and its derivatives, as well as the red anthraquinones endocrocin and clavorubin. In Claviceps purpurea (strain 20.1) (Ergot fungus), this protein is Transcriptional regulator CPUR_05421.